A 492-amino-acid chain; its full sequence is Probable cobyric acid synthase (492 aa).

The GATase cobBQ-type domain occupies 252 to 444 (PIEVNIVKFS…FHGILENFEF (193 aa)). Cys330 functions as the Nucleophile in the catalytic mechanism. The active site involves His436.

Belongs to the CobB/CobQ family. CobQ subfamily.

It participates in cofactor biosynthesis; adenosylcobalamin biosynthesis. Its function is as follows. Catalyzes amidations at positions B, D, E, and G on adenosylcobyrinic A,C-diamide. NH(2) groups are provided by glutamine, and one molecule of ATP is hydrogenolyzed for each amidation. The chain is Probable cobyric acid synthase from Methanococcus maripaludis (strain C5 / ATCC BAA-1333).